The following is a 380-amino-acid chain: Chaperone protein DnaJ (380 aa).

The J domain occupies 5–70 (DFYETLGVSK…QKRAAYDRFG (66 aa)). Residues 141-219 (GKTAQIRVPT…CHGQGRVTEE (79 aa)) form a CR-type zinc finger. Zn(2+) contacts are provided by C154, C157, C171, C174, C193, C196, C207, and C210. 4 CXXCXGXG motif repeats span residues 154 to 161 (CEVCSGSG), 171 to 178 (CATCQGSG), 193 to 200 (CPTCQGRG), and 207 to 214 (CGKCHGQG).

Belongs to the DnaJ family. In terms of assembly, homodimer. Zn(2+) is required as a cofactor.

It is found in the cytoplasm. Its function is as follows. Participates actively in the response to hyperosmotic and heat shock by preventing the aggregation of stress-denatured proteins and by disaggregating proteins, also in an autonomous, DnaK-independent fashion. Unfolded proteins bind initially to DnaJ; upon interaction with the DnaJ-bound protein, DnaK hydrolyzes its bound ATP, resulting in the formation of a stable complex. GrpE releases ADP from DnaK; ATP binding to DnaK triggers the release of the substrate protein, thus completing the reaction cycle. Several rounds of ATP-dependent interactions between DnaJ, DnaK and GrpE are required for fully efficient folding. Also involved, together with DnaK and GrpE, in the DNA replication of plasmids through activation of initiation proteins. In Allorhizobium ampelinum (strain ATCC BAA-846 / DSM 112012 / S4) (Agrobacterium vitis (strain S4)), this protein is Chaperone protein DnaJ.